The following is a 425-amino-acid chain: Serine--tRNA ligase (425 aa).

The segment at 110-134 is disordered; that stretch reads NLPSADAPEGKSEADNVEVKRWGEP. A compositionally biased stretch (basic and acidic residues) spans 117–134; sequence PEGKSEADNVEVKRWGEP. 233 to 235 contributes to the L-serine binding site; it reads TAE. 264 to 266 contributes to the ATP binding site; the sequence is RRE. Residue glutamate 287 participates in L-serine binding. 351–354 is an ATP binding site; sequence EISS. Serine 385 contacts L-serine.

Belongs to the class-II aminoacyl-tRNA synthetase family. Type-1 seryl-tRNA synthetase subfamily. In terms of assembly, homodimer. The tRNA molecule binds across the dimer.

It localises to the cytoplasm. It carries out the reaction tRNA(Ser) + L-serine + ATP = L-seryl-tRNA(Ser) + AMP + diphosphate + H(+). The enzyme catalyses tRNA(Sec) + L-serine + ATP = L-seryl-tRNA(Sec) + AMP + diphosphate + H(+). The protein operates within aminoacyl-tRNA biosynthesis; selenocysteinyl-tRNA(Sec) biosynthesis; L-seryl-tRNA(Sec) from L-serine and tRNA(Sec): step 1/1. Functionally, catalyzes the attachment of serine to tRNA(Ser). Is also able to aminoacylate tRNA(Sec) with serine, to form the misacylated tRNA L-seryl-tRNA(Sec), which will be further converted into selenocysteinyl-tRNA(Sec). The sequence is that of Serine--tRNA ligase from Synechococcus sp. (strain RCC307).